We begin with the raw amino-acid sequence, 1513 residues long: DNA-directed RNA polymerase subunit beta'' (1513 aa).

Zn(2+) contacts are provided by Cys-220, Cys-296, Cys-303, and Cys-306. Positions 644–769 (RTREKDSENE…EYGNPEEDSV (126 aa)) are disordered. The segment covering 659-679 (NEYRTREEECKTLEDEYRTRE) has biased composition (basic and acidic residues). Positions 680-707 (EEYETLEDEYGIPENEYETLEDEYGILE) are enriched in acidic residues. Basic and acidic residues predominate over residues 726-737 (NKYRPREDKYGT). Acidic residues predominate over residues 738-767 (LEEDSEDEHGTLEEDSEEDSEDEYGNPEED).

Belongs to the RNA polymerase beta' chain family. RpoC2 subfamily. In terms of assembly, in plastids the minimal PEP RNA polymerase catalytic core is composed of four subunits: alpha, beta, beta', and beta''. When a (nuclear-encoded) sigma factor is associated with the core the holoenzyme is formed, which can initiate transcription. Requires Zn(2+) as cofactor.

It localises to the plastid. Its subcellular location is the chloroplast. It catalyses the reaction RNA(n) + a ribonucleoside 5'-triphosphate = RNA(n+1) + diphosphate. Its function is as follows. DNA-dependent RNA polymerase catalyzes the transcription of DNA into RNA using the four ribonucleoside triphosphates as substrates. The chain is DNA-directed RNA polymerase subunit beta'' from Oryza nivara (Indian wild rice).